The sequence spans 290 residues: Prepilin leader peptidase/N-methyltransferase (290 aa).

Residues 13–33 (AFVLCTILLGLLVGSFLNVVV) traverse the membrane as a helical segment. Cysteine 72, cysteine 75, cysteine 97, and cysteine 100 together coordinate Zn(2+). Helical transmembrane passes span 128–148 (FTWQ…MSLI), 158–178 (VLVL…LFAS), 183–203 (LFGA…FKLV), 228–248 (ILPL…VIML), and 261–276 (FGPY…LLWG).

The protein belongs to the peptidase A24 family. The cofactor is Zn(2+).

It localises to the cell inner membrane. It catalyses the reaction Typically cleaves a -Gly-|-Phe- bond to release an N-terminal, basic peptide of 5-8 residues from type IV prepilin, and then N-methylates the new N-terminal amino group, the methyl donor being S-adenosyl-L-methionine.. Its function is as follows. Plays an essential role in type IV pili and type II pseudopili formation by proteolytically removing the leader sequence from substrate proteins and subsequently monomethylating the alpha-amino group of the newly exposed N-terminal phenylalanine. Substrates include proteins required for pilus biogenesis PilE, PilV, PilW, and PilX as well as some components of the type II general secretory apparatus GspG, GspH, GspI and GspJ. The chain is Prepilin leader peptidase/N-methyltransferase (pilD) from Pseudomonas aeruginosa (strain ATCC 15692 / DSM 22644 / CIP 104116 / JCM 14847 / LMG 12228 / 1C / PRS 101 / PAO1).